A 707-amino-acid polypeptide reads, in one-letter code: Choline transporter-like protein 4 (707 aa).

Topologically, residues 1-33 (MGGKQDQDKEAYGKPAKYDPSFRGPIRNRSCTD) are cytoplasmic. A helical membrane pass occupies residues 34–54 (IICCVLFFLFILGYIAVGILA). Topologically, residues 55–227 (WVYGDPKQVL…KIFEDFAQSW (173 aa)) are extracellular. Residues N68, N185, and N196 are each glycosylated (N-linked (GlcNAc...) asparagine). Residues 228–248 (YWILIALGLALVLSLLFILLL) form a helical membrane-spanning segment. Residues 249–250 (RL) are Cytoplasmic-facing. Residues 251–271 (VAGPLVFVLIIGVLGVLAYGI) traverse the membrane as a helical segment. Topologically, residues 272–307 (YHCWEEYRVLRDKGASISQLGFTTNLSAYRNVQETW) are extracellular. The N-linked (GlcNAc...) asparagine glycan is linked to N296. The helical transmembrane segment at 308-328 (LAALIILAVLEGVLLLMLIFL) threads the bilayer. At 329 to 356 (RQRICIAIALLKEASRAVGYIMSTMFYP) the chain is on the cytoplasmic side. Residues 357 to 377 (LVTFALLLVCIAYWAIIALFL) traverse the membrane as a helical segment. The Extracellular portion of the chain corresponds to 378–452 (ATSGQPQYVF…AVLGLFWTIN (75 aa)). N391, N403, and N413 each carry an N-linked (GlcNAc...) asparagine glycan. The chain crosses the membrane as a helical span at residues 453-473 (WVLALGQCVLAGAFASFYWAF). The Cytoplasmic portion of the chain corresponds to 474–498 (HKPRDIPTFPLGSAFLRTLRYHTGS). Residues 499 to 519 (LAFGALILTLVQIARVILEYI) traverse the membrane as a helical segment. At 520–557 (DHKLRGAQNPLTRCILCCFKCCLWCLEKFIKFLNRNAY) the chain is on the extracellular side. A helical membrane pass occupies residues 558 to 578 (IMIAIYGKNFCVSAKNAFMLL). Residues 579–594 (MRNIVRVVVLDKVTDL) are Cytoplasmic-facing. The chain crosses the membrane as a helical span at residues 595 to 615 (LLFFGKLLVVGGVGVLSFFFF). Residues 616–635 (TGRIPSLGKTFENPQLNYYW) are Extracellular-facing. A helical membrane pass occupies residues 636 to 656 (LPIMVSILGAYLIASGFFSVF). The Cytoplasmic portion of the chain corresponds to 657–707 (GMCVDTLFLCFLEDLERNDGSADRPYYMSKSLLKILGKKNKGTPGDKKRKK).

The protein belongs to the CTL (choline transporter-like) family. In terms of processing, N-glycosylated; N-glycosylation of Asn-68 and Asn-391 is required for a proper thiamine pyrophosphate uptake.

It is found in the membrane. Its subcellular location is the apical cell membrane. The catalysed reaction is choline(out) + n H(+)(in) = choline(in) + n H(+)(out). It catalyses the reaction thiamine diphosphate(out) = thiamine diphosphate(in). Choline transporter that plays a role in the choline-acetylcholine system and is required to the efferent innervation of hair cells in the olivocochlear bundle for the maintenance of physiological function of outer hair cells and the protection of hair cells from acoustic injury. Also described as a thiamine pyrophosphate transporter in colon, may mediate the absorption of microbiota-generated thiamine pyrophosphate and contribute to host thiamine (vitamin B1) homeostasis. The protein is Choline transporter-like protein 4 of Bos taurus (Bovine).